The chain runs to 20 residues: 39 kDa major outer membrane protein (20 aa).

Its subcellular location is the cell outer membrane. This is 39 kDa major outer membrane protein from Aggregatibacter actinomycetemcomitans (Actinobacillus actinomycetemcomitans).